The chain runs to 409 residues: Divalent metal cation transporter MntH (409 aa).

Transmembrane regions (helical) follow at residues Leu-19–Ala-39, Ala-46–Val-66, Trp-98–Ile-118, Leu-122–Ile-142, Leu-155–Ser-175, Ala-196–His-216, Ile-241–Phe-261, Val-290–Gly-310, Phe-320–Leu-340, Ile-348–Leu-368, and Ile-388–Leu-408.

The protein belongs to the NRAMP family.

The protein resides in the cell inner membrane. Its function is as follows. H(+)-stimulated, divalent metal cation uptake system. In Yersinia pseudotuberculosis serotype O:1b (strain IP 31758), this protein is Divalent metal cation transporter MntH.